Reading from the N-terminus, the 92-residue chain is YcgL domain-containing protein PBPRA1080 (92 aa).

The YcgL domain occupies methionine 1–lysine 84.

In Photobacterium profundum (strain SS9), this protein is YcgL domain-containing protein PBPRA1080.